An 89-amino-acid chain; its full sequence is MSLSTEAKAQIIAEFGRDANDSGSSEVQVALLTAQINHLQGHFSEHKKDHHSRRGLLRMVSQRRKLLDYLKRKNVTSYTALIGRLGLRR.

This sequence belongs to the universal ribosomal protein uS15 family. As to quaternary structure, part of the 30S ribosomal subunit. Forms a bridge to the 50S subunit in the 70S ribosome, contacting the 23S rRNA.

Its function is as follows. One of the primary rRNA binding proteins, it binds directly to 16S rRNA where it helps nucleate assembly of the platform of the 30S subunit by binding and bridging several RNA helices of the 16S rRNA. Functionally, forms an intersubunit bridge (bridge B4) with the 23S rRNA of the 50S subunit in the ribosome. In Photorhabdus luminescens (Xenorhabdus luminescens), this protein is Small ribosomal subunit protein uS15.